A 178-amino-acid polypeptide reads, in one-letter code: ATP synthase subunit delta (178 aa).

It belongs to the ATPase delta chain family. As to quaternary structure, F-type ATPases have 2 components, F(1) - the catalytic core - and F(0) - the membrane proton channel. F(1) has five subunits: alpha(3), beta(3), gamma(1), delta(1), epsilon(1). F(0) has three main subunits: a(1), b(2) and c(10-14). The alpha and beta chains form an alternating ring which encloses part of the gamma chain. F(1) is attached to F(0) by a central stalk formed by the gamma and epsilon chains, while a peripheral stalk is formed by the delta and b chains.

Its subcellular location is the cell membrane. Its function is as follows. F(1)F(0) ATP synthase produces ATP from ADP in the presence of a proton or sodium gradient. F-type ATPases consist of two structural domains, F(1) containing the extramembraneous catalytic core and F(0) containing the membrane proton channel, linked together by a central stalk and a peripheral stalk. During catalysis, ATP synthesis in the catalytic domain of F(1) is coupled via a rotary mechanism of the central stalk subunits to proton translocation. This protein is part of the stalk that links CF(0) to CF(1). It either transmits conformational changes from CF(0) to CF(1) or is implicated in proton conduction. The polypeptide is ATP synthase subunit delta (Streptococcus agalactiae serotype Ia (strain ATCC 27591 / A909 / CDC SS700)).